The primary structure comprises 276 residues: Anamorsin homolog (276 aa).

Residues 1–152 (MEPYVVDNLN…TRGSSIKLPW (152 aa)) form an N-terminal SAM-like domain region. Residues 152-189 (WAHSDIEAAWENVDNETSYDVDKNLINTNSLLQKSDYV) are linker. [2Fe-2S] cluster is bound by residues cysteine 195, cysteine 211, cysteine 214, and cysteine 216. A fe-S binding site A region spans residues 195–216 (CGQEFAKNSIGKRKRACKNCTC). Positions 237, 240, 248, and 251 each coordinate [4Fe-4S] cluster. 2 consecutive short sequence motifs (cx2C motif) follow at residues 237–240 (CGNC) and 248–251 (CSTC). Positions 237–251 (CGNCYLGDAFRCSTC) are fe-S binding site B.

Belongs to the anamorsin family. As to quaternary structure, monomer. It depends on [2Fe-2S] cluster as a cofactor. The cofactor is [4Fe-4S] cluster.

It is found in the cytoplasm. The protein localises to the mitochondrion intermembrane space. Component of the cytosolic iron-sulfur (Fe-S) protein assembly (CIA) machinery. Required for the maturation of extramitochondrial Fe-S proteins. Part of an electron transfer chain functioning in an early step of cytosolic Fe-S biogenesis, facilitating the de novo assembly of a [4Fe-4S] cluster on the cytosolic Fe-S scaffold complex. Electrons are transferred from NADPH via a FAD- and FMN-containing diflavin oxidoreductase. Together with the diflavin oxidoreductase, also required for the assembly of the diferric tyrosyl radical cofactor of ribonucleotide reductase (RNR), probably by providing electrons for reduction during radical cofactor maturation in the catalytic small subunit. The chain is Anamorsin homolog from Schistosoma japonicum (Blood fluke).